The chain runs to 643 residues: NADH-ubiquinone oxidoreductase chain 5 (643 aa).

Helical transmembrane passes span 7 to 27, 64 to 84, 114 to 134, 140 to 160, 163 to 183, 208 to 228, 230 to 250, 277 to 297, 301 to 321, 338 to 358, 398 to 418, 437 to 457, 486 to 506, 511 to 531, 555 to 575, and 615 to 635; these read IIIL…VFFF, LLKT…IFNI, TFLS…YYYM, PNNF…LTST, IFLL…LISW, ILLF…PEIF, ISAP…AAAG, SSTM…LYAC, FNTW…TTAI, LGLM…FHIC, AACI…PGFY, IVLS…IIFF, ALGT…VPII, VLKT…ISIL, FYEN…SLSL, and YLLF…TTIS.

This sequence belongs to the complex I subunit 5 family.

It is found in the mitochondrion inner membrane. The enzyme catalyses a ubiquinone + NADH + 5 H(+)(in) = a ubiquinol + NAD(+) + 4 H(+)(out). Core subunit of the mitochondrial membrane respiratory chain NADH dehydrogenase (Complex I) that is believed to belong to the minimal assembly required for catalysis. Complex I functions in the transfer of electrons from NADH to the respiratory chain. The immediate electron acceptor for the enzyme is believed to be ubiquinone. The sequence is that of NADH-ubiquinone oxidoreductase chain 5 (ND5) from Patiria pectinifera (Starfish).